The following is a 324-amino-acid chain: Tumor necrosis factor receptor superfamily member 6 (324 aa).

Positions 1 to 21 (MLWIMAVLPLVLAGPELNVRM) are cleaved as a signal peptide. Topologically, residues 22 to 171 (QGTDSIFEGL…CKKQSSNYKL (150 aa)) are extracellular. A glycan (N-linked (GlcNAc...) asparagine) is linked at Asn43. 3 TNFR-Cys repeats span residues 43-79 (NCSE…PTCH), 80-123 (PCTE…NTKC), and 124-163 (RCKE…TKCK). Intrachain disulfides connect Cys44/Cys55, Cys56/Cys69, Cys59/Cys78, Cys81/Cys97, Cys100/Cys115, Cys103/Cys123, Cys125/Cys139, Cys142/Cys154, and Cys145/Cys162. Asn114 and Asn132 each carry an N-linked (GlcNAc...) asparagine glycan. Residues 172–188 (LWLLILPGLAILFVFIY) form a helical membrane-spanning segment. The Cytoplasmic segment spans residues 189–324 (KRYRKRQPGD…RNENEGQSLE (136 aa)). Positions 201 to 306 (SGIPSPESVP…EEIQAMVWED (106 aa)) are interaction with HIPK3. A Phosphoserine modification is found at Ser214. Residues 219 to 243 (NKYIWRTAEKMKICDAKKFARQHKI) are interaction with CALM. The Death domain occupies 219–303 (NKYIWRTAEK…DIAEEIQAMV (85 aa)).

As to quaternary structure, component of the death-induced signaling complex (DISC) composed of cell surface receptor FAS/CD95, adapter protein FADD and the CASP8 protease; recruitment of CASP8 to the complex is required for processing of CASP8 into the p18 and p10 subunits. Interacts directly (via DED domain) with NOL3 (via CARD domain); inhibits death-inducing signaling complex (DISC) assembly by inhibiting the increase in FAS-FADD binding induced by FAS activation. Binds DAXX. Interacts with HIPK3. Part of a complex containing HIPK3 and FADD. Binds RIPK1 and FAIM2. Interacts with BABAM2 and FEM1B. Interacts with CALM. In the absence of stimulation, interacts with BIRC2, DDX3X and GSK3B. The interaction with BIRC2 and DDX3X is further enhanced upon receptor stimulation and accompanied by DDX3X and BIRC2 cleavage. In terms of processing, palmitoylated. Palmitoylation by ZDHHC7 prevents the lysosomal degradation of FAS regulating its expression at the plasma membrane.

The protein resides in the cell membrane. It is found in the membrane raft. In terms of biological role, receptor for TNFSF6/FASLG. The adapter molecule FADD recruits caspase CASP8 to the activated receptor. The resulting death-inducing signaling complex (DISC) performs CASP8 proteolytic activation which initiates the subsequent cascade of caspases (aspartate-specific cysteine proteases) mediating apoptosis. FAS-mediated apoptosis may have a role in the induction of peripheral tolerance, in the antigen-stimulated suicide of mature T-cells, or both. This Rattus norvegicus (Rat) protein is Tumor necrosis factor receptor superfamily member 6 (Fas).